The primary structure comprises 153 residues: Small ribosomal subunit protein uS13 (153 aa).

Belongs to the universal ribosomal protein uS13 family. As to quaternary structure, part of the 30S ribosomal subunit. Forms a loose heterodimer with protein S19. Forms two bridges to the 50S subunit in the 70S ribosome.

Functionally, located at the top of the head of the 30S subunit, it contacts several helices of the 16S rRNA. In the 70S ribosome it contacts the 23S rRNA (bridge B1a) and protein L5 of the 50S subunit (bridge B1b), connecting the 2 subunits; these bridges are implicated in subunit movement. The protein is Small ribosomal subunit protein uS13 of Pyrobaculum islandicum (strain DSM 4184 / JCM 9189 / GEO3).